A 173-amino-acid chain; its full sequence is Adenine phosphoribosyltransferase (173 aa).

It belongs to the purine/pyrimidine phosphoribosyltransferase family. As to quaternary structure, homodimer.

The protein resides in the cytoplasm. The catalysed reaction is AMP + diphosphate = 5-phospho-alpha-D-ribose 1-diphosphate + adenine. Its pathway is purine metabolism; AMP biosynthesis via salvage pathway; AMP from adenine: step 1/1. Functionally, catalyzes a salvage reaction resulting in the formation of AMP, that is energically less costly than de novo synthesis. The protein is Adenine phosphoribosyltransferase of Macrococcus caseolyticus (strain JCSC5402) (Macrococcoides caseolyticum).